Reading from the N-terminus, the 290-residue chain is Ribosomal RNA small subunit methyltransferase A (290 aa).

Asn-27, Leu-29, Gly-54, Glu-75, Asp-100, and Asn-125 together coordinate S-adenosyl-L-methionine.

Belongs to the class I-like SAM-binding methyltransferase superfamily. rRNA adenine N(6)-methyltransferase family. RsmA subfamily.

The protein resides in the cytoplasm. It carries out the reaction adenosine(1518)/adenosine(1519) in 16S rRNA + 4 S-adenosyl-L-methionine = N(6)-dimethyladenosine(1518)/N(6)-dimethyladenosine(1519) in 16S rRNA + 4 S-adenosyl-L-homocysteine + 4 H(+). Its function is as follows. Specifically dimethylates two adjacent adenosines (A1518 and A1519) in the loop of a conserved hairpin near the 3'-end of 16S rRNA in the 30S particle. May play a critical role in biogenesis of 30S subunits. The chain is Ribosomal RNA small subunit methyltransferase A from Streptococcus pneumoniae (strain ATCC 700669 / Spain 23F-1).